The following is a 127-amino-acid chain: Ribonuclease VapC9 (127 aa).

Residues 2–115 (IVVDASAALA…VTADLRLSDT (114 aa)) enclose the PINc domain. Aspartate 5 and aspartate 91 together coordinate Mg(2+).

This sequence belongs to the PINc/VapC protein family. The cofactor is Mg(2+).

In terms of biological role, toxic component of a type II toxin-antitoxin (TA) system. An RNase. The cognate antitoxin is VapB9. This Mycobacterium tuberculosis (strain CDC 1551 / Oshkosh) protein is Ribonuclease VapC9.